A 128-amino-acid polypeptide reads, in one-letter code: Cytochrome c-type biogenesis protein CcmE (128 aa).

The Cytoplasmic segment spans residues 1–8 (MQKIVRNR). The helical; Signal-anchor for type II membrane protein transmembrane segment at 9-29 (LIKIILCFCSTCLGISIILYN) threads the bilayer. At 30–128 (LEKNIIFFFP…KHDENYRPPS (99 aa)) the chain is on the periplasmic side. His120 and Tyr124 together coordinate heme.

Belongs to the CcmE/CycJ family.

It localises to the cell inner membrane. Its function is as follows. Heme chaperone required for the biogenesis of c-type cytochromes. Transiently binds heme delivered by CcmC and transfers the heme to apo-cytochromes in a process facilitated by CcmF and CcmH. This is Cytochrome c-type biogenesis protein CcmE from Rickettsia typhi (strain ATCC VR-144 / Wilmington).